A 297-amino-acid chain; its full sequence is HTH-type transcriptional regulator ArgP (297 aa).

The HTH lysR-type domain maps to 4–60 (PDYRTLQALDAVIRERGFERAAQKLCITQSAVSQRIKQLENMFGQPLLVRTVPPRPT). The H-T-H motif DNA-binding region spans 21–40 (FERAAQKLCITQSAVSQRIK).

The protein belongs to the LysR transcriptional regulatory family. In terms of assembly, homodimer.

Its function is as follows. Controls the transcription of genes involved in arginine and lysine metabolism. In Salmonella choleraesuis (strain SC-B67), this protein is HTH-type transcriptional regulator ArgP.